Reading from the N-terminus, the 75-residue chain is Small ribosomal subunit protein bS18 (75 aa).

The protein belongs to the bacterial ribosomal protein bS18 family. In terms of assembly, part of the 30S ribosomal subunit. Forms a tight heterodimer with protein bS6.

Binds as a heterodimer with protein bS6 to the central domain of the 16S rRNA, where it helps stabilize the platform of the 30S subunit. The polypeptide is Small ribosomal subunit protein bS18 (Methylobacillus flagellatus (strain ATCC 51484 / DSM 6875 / VKM B-1610 / KT)).